The sequence spans 398 residues: Cytohesin-1 (398 aa).

The residue at position 1 (Met1) is an N-acetylmethionine. The stretch at 10-67 (SDLTAEERQELENIRRRKQELLADIQRLKDEIAEVANEIENLGSTEERKNMQRNKQVA) forms a coiled coil. The SEC7 domain occupies 73–202 (FNMDPKKGIQ…IIMLNTSLHN (130 aa)). The PH domain occupies 260–377 (NPDREGWLLK…WIKCIKAAIS (118 aa)). A 1,2-diacyl-sn-glycero-3-phospho-(1D-myo-inositol-3,4,5-trisphosphate)-binding positions include 269–277 (KLGGGRVKT), Arg281, Tyr292, Arg302, and Asn351. The tract at residues 388-396 (RKKKVSSTK) is C-terminal autoinhibitory region.

Interacts with TRIM23 and CYTIP. Interacts (via coiled-coil domain) with FRMD4A (via coiled-coil domain). Interacts with FRMD4B. Found in a complex with PARD3, CYTH1 and FRMD4A. Interacts (via N-terminal domain) with INAVA (via N-terminal domain). Ubiquitinated by SCF(FBXW11) E3 ubiquitin-protein ligase complex. Ubiquitination induces proteasomal degradation.

It localises to the cell membrane. The protein resides in the cytoplasm. The protein localises to the cytosol. It is found in the cell junction. Its subcellular location is the tight junction. It localises to the adherens junction. Functionally, promotes guanine-nucleotide exchange on ARF1, ARF5 and ARF6. Promotes the activation of ARF factors through replacement of GDP with GTP. Plays an important role in membrane trafficking, during junctional remodeling and epithelial polarization, through regulation of ARF6 activity. The polypeptide is Cytohesin-1 (CYTH1) (Chlorocebus aethiops (Green monkey)).